Reading from the N-terminus, the 465-residue chain is Glutamate--tRNA ligase (465 aa).

Residues 10-20 (PSPTGQLHIGG) carry the 'HIGH' region motif. Zn(2+) contacts are provided by Cys99, Cys101, Cys126, and Glu128. The 'KMSKS' region signature appears at 236 to 240 (KLSKR). Residue Lys239 coordinates ATP.

This sequence belongs to the class-I aminoacyl-tRNA synthetase family. Glutamate--tRNA ligase type 1 subfamily. In terms of assembly, monomer. Requires Zn(2+) as cofactor.

Its subcellular location is the cytoplasm. It catalyses the reaction tRNA(Glu) + L-glutamate + ATP = L-glutamyl-tRNA(Glu) + AMP + diphosphate. Its function is as follows. Catalyzes the attachment of glutamate to tRNA(Glu) in a two-step reaction: glutamate is first activated by ATP to form Glu-AMP and then transferred to the acceptor end of tRNA(Glu). This Lawsonia intracellularis (strain PHE/MN1-00) protein is Glutamate--tRNA ligase.